The primary structure comprises 633 residues: Beta-myrcene synthase TPS15CT (633 aa).

A chloroplast-targeting transit peptide spans 1–55; sequence MHCMAVHQFSPSIVSSLPTISTYNNNHFCRFFTPKTSISPISKTKSKSSTCYPIQ. Arginine 344, aspartate 381, aspartate 385, arginine 525, and aspartate 528 together coordinate (2E)-geranyl diphosphate. 2 residues coordinate Mg(2+): aspartate 381 and aspartate 385. A DDXXD motif motif is present at residues 381 to 385; that stretch reads DDIYD. 3 residues coordinate Mg(2+): aspartate 528, threonine 532, and glutamate 536.

The protein belongs to the terpene synthase family. Tpsb subfamily. It depends on Mg(2+) as a cofactor. The cofactor is Mn(2+).

It localises to the plastid. The protein resides in the chloroplast. The enzyme catalyses (2E)-geranyl diphosphate = beta-myrcene + diphosphate. Its pathway is secondary metabolite biosynthesis; terpenoid biosynthesis. Its function is as follows. Involved in monoterpene (C10) olefins biosynthesis, constituants of cannabinoids and terpenoids-rich resins. Catalyzes strictly the conversion of (2E)-geranyl diphosphate to beta-myrcene. This Cannabis sativa (Hemp) protein is Beta-myrcene synthase TPS15CT.